The chain runs to 327 residues: Phosphate acyltransferase (327 aa).

It belongs to the PlsX family. In terms of assembly, homodimer. Probably interacts with PlsY.

It localises to the cytoplasm. The catalysed reaction is a fatty acyl-[ACP] + phosphate = an acyl phosphate + holo-[ACP]. The protein operates within lipid metabolism; phospholipid metabolism. Catalyzes the reversible formation of acyl-phosphate (acyl-PO(4)) from acyl-[acyl-carrier-protein] (acyl-ACP). This enzyme utilizes acyl-ACP as fatty acyl donor, but not acyl-CoA. The protein is Phosphate acyltransferase of Thermosipho africanus (strain TCF52B).